A 391-amino-acid polypeptide reads, in one-letter code: Secreted aspartic protease 1 (391 aa).

Positions 1-18 (MFLKNIFIALAIALLVDA) are cleaved as a signal peptide. The propeptide at 19-50 (SPAKRSPGFVTLDFDVIKTPVNATGQEGKVKR) is activation peptide. Residue Asn-40 is glycosylated (N-linked (GlcNAc...) asparagine). Positions 64–377 (YAADITIGSN…DLDDDKISLA (314 aa)) constitute a Peptidase A1 domain. Asp-82 is an active-site residue. 82–84 (DTG) serves as a coordination point for pepstatin A. Cysteines 97 and 109 form a disulfide. The Zn(2+) site is built by Asp-241 and Asp-263. The active site involves Asp-267. 267–271 (DSGTT) is a binding site for pepstatin A. An intrachain disulfide couples Cys-305 to Cys-343.

Belongs to the peptidase A1 family. In terms of assembly, monomer.

The protein localises to the secreted. The enzyme catalyses Preferential cleavage at the carboxyl of hydrophobic amino acids, but fails to cleave 15-Leu-|-Tyr-16, 16-Tyr-|-Leu-17 and 24-Phe-|-Phe-25 of insulin B chain. Activates trypsinogen, and degrades keratin.. Inhibited by pepstatin A analogs and squash aspartic peptidase inhibitor (SQAPI). In terms of biological role, secreted aspartic peptidases (SAPs) are a group of ten acidic hydrolases considered as key virulence factors. These enzymes supply the fungus with nutrient amino acids as well as are able to degrade the selected host's proteins involved in the immune defense. Induces host inflammatory cytokine production in a proteolytic activity-independent way. Plays a role in tissue damage during superficial infection. Moreover, acts toward human hemoglobin though limited proteolysis to generate a variety of antimicrobial hemocidins, enabling to compete with the other microorganisms of the same physiological niche using the microbicidal peptides generated from the host protein. Plays a key role in defense against host by cleaving histatin-5 (Hst 5), a peptide from human saliva that carries out fungicidal activity. The cleavage rate decreases in an order of SAP2 &gt; SAP9 &gt; SAP3 &gt; SAP7 &gt; SAP4 &gt; SAP1 &gt; SAP8. The first cleavage occurs between residues 'Lys-17' and 'His-18' of Hst 5, giving DSHAKRHHGYKRKFHEK and HHSHRGY peptides. Further fragmentation by SAP1 results in AKRHHGYKRKFHEK and AKRHHGY products. In Candida albicans (Yeast), this protein is Secreted aspartic protease 1.